The chain runs to 358 residues: Phosphoserine aminotransferase (358 aa).

Arginine 41 contacts L-glutamate. Residues 75–76 (AR), tryptophan 101, threonine 150, aspartate 170, and glutamine 193 contribute to the pyridoxal 5'-phosphate site. Lysine 194 carries the post-translational modification N6-(pyridoxal phosphate)lysine. Position 235–236 (235–236 (NT)) interacts with pyridoxal 5'-phosphate.

Belongs to the class-V pyridoxal-phosphate-dependent aminotransferase family. SerC subfamily. As to quaternary structure, homodimer. Pyridoxal 5'-phosphate is required as a cofactor.

The protein localises to the cytoplasm. The enzyme catalyses O-phospho-L-serine + 2-oxoglutarate = 3-phosphooxypyruvate + L-glutamate. It carries out the reaction 4-(phosphooxy)-L-threonine + 2-oxoglutarate = (R)-3-hydroxy-2-oxo-4-phosphooxybutanoate + L-glutamate. It functions in the pathway amino-acid biosynthesis; L-serine biosynthesis; L-serine from 3-phospho-D-glycerate: step 2/3. It participates in cofactor biosynthesis; pyridoxine 5'-phosphate biosynthesis; pyridoxine 5'-phosphate from D-erythrose 4-phosphate: step 3/5. Catalyzes the reversible conversion of 3-phosphohydroxypyruvate to phosphoserine and of 3-hydroxy-2-oxo-4-phosphonooxybutanoate to phosphohydroxythreonine. This Histophilus somni (strain 129Pt) (Haemophilus somnus) protein is Phosphoserine aminotransferase.